The following is a 254-amino-acid chain: 3-deoxy-manno-octulosonate cytidylyltransferase (254 aa).

It belongs to the KdsB family.

The protein resides in the cytoplasm. The enzyme catalyses 3-deoxy-alpha-D-manno-oct-2-ulosonate + CTP = CMP-3-deoxy-beta-D-manno-octulosonate + diphosphate. It participates in nucleotide-sugar biosynthesis; CMP-3-deoxy-D-manno-octulosonate biosynthesis; CMP-3-deoxy-D-manno-octulosonate from 3-deoxy-D-manno-octulosonate and CTP: step 1/1. The protein operates within bacterial outer membrane biogenesis; lipopolysaccharide biosynthesis. Its function is as follows. Activates KDO (a required 8-carbon sugar) for incorporation into bacterial lipopolysaccharide in Gram-negative bacteria. This chain is 3-deoxy-manno-octulosonate cytidylyltransferase, found in Pseudomonas putida (strain W619).